The chain runs to 376 residues: Thymidine kinase (376 aa).

The disordered stretch occupies residues 1-38 (MASYPCHQHASAFDQAARSRGHNNRRTALRPRRQQKAT). Over residues 19 to 35 (SRGHNNRRTALRPRRQQ) the composition is skewed to basic residues. An ATP-binding site is contributed by 56 to 63 (GPHGMGKT). E83 (proton acceptor) is an active-site residue. Substrate is bound by residues Y101 and Q125. R216 lines the ATP pocket. Position 222 (R222) interacts with substrate.

This sequence belongs to the herpesviridae thymidine kinase family. Homodimer.

It carries out the reaction thymidine + ATP = dTMP + ADP + H(+). In terms of biological role, catalyzes the transfer of the gamma-phospho group of ATP to thymidine to generate dTMP in the salvage pathway of pyrimidine synthesis. The dTMP serves as a substrate for DNA polymerase during viral DNA replication. Allows the virus to be reactivated and to grow in non-proliferative cells lacking a high concentration of phosphorylated nucleic acid precursors. This Homo sapiens (Human) protein is Thymidine kinase.